We begin with the raw amino-acid sequence, 128 residues long: Fluoride-specific ion channel FluC (128 aa).

4 consecutive transmembrane segments (helical) span residues 8 to 28 (IIFI…LGLL), 38 to 58 (LGTL…LAFF), 71 to 91 (FFVT…AEVI), and 103 to 123 (LMLA…GVFI). Positions 78 and 81 each coordinate Na(+).

Belongs to the fluoride channel Fluc/FEX (TC 1.A.43) family.

The protein localises to the cell inner membrane. The enzyme catalyses fluoride(in) = fluoride(out). With respect to regulation, na(+) is not transported, but it plays an essential structural role and its presence is essential for fluoride channel function. Fluoride-specific ion channel. Important for reducing fluoride concentration in the cell, thus reducing its toxicity. This chain is Fluoride-specific ion channel FluC, found in Pasteurella multocida (strain Pm70).